The chain runs to 306 residues: Curved DNA-binding protein (306 aa).

Residues 5–69 (DYYAIMGVKP…QRRAEYDQLW (65 aa)) form the J domain.

It localises to the cytoplasm. It is found in the nucleoid. Functionally, DNA-binding protein that preferentially recognizes a curved DNA sequence. It is probably a functional analog of DnaJ; displays overlapping activities with DnaJ, but functions under different conditions, probably acting as a molecular chaperone in an adaptive response to environmental stresses other than heat shock. Lacks autonomous chaperone activity; binds native substrates and targets them for recognition by DnaK. Its activity is inhibited by the binding of CbpM. The chain is Curved DNA-binding protein from Salmonella paratyphi A (strain ATCC 9150 / SARB42).